A 100-amino-acid polypeptide reads, in one-letter code: MRLTPHEQERLLISYAAELARRRRSRGLLLNHPEAIAIITDHLLEGARDGRTVAELMVSGREVLGRDDVMDGVPEMIPDVQVEATFPDGTKLVTVHHPIG.

Belongs to the urease gamma subunit family. As to quaternary structure, heterotrimer of UreA (gamma), UreB (beta) and UreC (alpha) subunits. Three heterotrimers associate to form the active enzyme.

The protein localises to the cytoplasm. The catalysed reaction is urea + 2 H2O + H(+) = hydrogencarbonate + 2 NH4(+). Its pathway is nitrogen metabolism; urea degradation; CO(2) and NH(3) from urea (urease route): step 1/1. The polypeptide is Urease subunit gamma (Mycobacteroides abscessus (strain ATCC 19977 / DSM 44196 / CCUG 20993 / CIP 104536 / JCM 13569 / NCTC 13031 / TMC 1543 / L948) (Mycobacterium abscessus)).